The following is a 476-amino-acid chain: Probable G-protein coupled receptor No9 (476 aa).

At 1 to 36 (MEGPPLSPAPADNVTLNVSCGRPATLFDWADHRLIS) the chain is on the extracellular side. Residues Asn13 and Asn17 are each glycosylated (N-linked (GlcNAc...) asparagine). The helical transmembrane segment at 37 to 60 (LLALAFLNLMVVAGNLLVVMAVFV) threads the bilayer. Residues 61 to 69 (HSKLRTVTN) lie on the Cytoplasmic side of the membrane. The helical transmembrane segment at 70 to 93 (LFIVSLACADLLVGMLVLPFSATL) threads the bilayer. The Extracellular segment spans residues 94 to 103 (EVLDVWLYGD). A helical transmembrane segment spans residues 104-127 (VWCSVWLAVDVWMCTSSILNLCAI). Cys106 and Cys192 are joined by a disulfide. Over 128-152 (SLDRYLAVSQPISYPSLMSTRRAKQ) the chain is Cytoplasmic. A helical transmembrane segment spans residues 153–172 (LIAAVWVLSFVICFPPLVGW). Residues 173 to 200 (NDRPGTLIGSRGSSACRLTCELTNERGY) are Extracellular-facing. The chain crosses the membrane as a helical span at residues 201–221 (VIYSALGSFFLPSTVMLFFYG). At 222–375 (RIYRTAVSTT…FRMETKAAKT (154 aa)) the chain is on the cytoplasmic side. Positions 266–278 (AAAGGARAHGQVR) are enriched in low complexity. Disordered regions lie at residues 266 to 293 (AAAG…NKPS) and 317 to 351 (DSRP…PRFI). The chain crosses the membrane as a helical span at residues 376–396 (VGIIVGLFILCWLPFFVCYLV). Topologically, residues 397-406 (RGFCADCVPP) are extracellular. A helical membrane pass occupies residues 407–430 (LLFSVFFWLGYCNSAVNPCVYALC). Topologically, residues 431–476 (SRDFRFAFSSILCKCVCRRGAMERRFRRTLLVGNRSQTEEDCEVAD) are cytoplasmic.

The protein belongs to the G-protein coupled receptor 1 family.

It localises to the cell membrane. Its function is as follows. Orphan G-protein coupled receptor. This Amphibalanus amphitrite (Striped barnacle) protein is Probable G-protein coupled receptor No9.